A 127-amino-acid polypeptide reads, in one-letter code: DNA-directed RNA polymerase subunit omega (127 aa).

Belongs to the RNA polymerase subunit omega family. In terms of assembly, the RNAP catalytic core consists of 2 alpha, 1 beta, 1 beta' and 1 omega subunit. When a sigma factor is associated with the core the holoenzyme is formed, which can initiate transcription.

It catalyses the reaction RNA(n) + a ribonucleoside 5'-triphosphate = RNA(n+1) + diphosphate. Its function is as follows. Promotes RNA polymerase assembly. Latches the N- and C-terminal regions of the beta' subunit thereby facilitating its interaction with the beta and alpha subunits. This chain is DNA-directed RNA polymerase subunit omega (rpoZ), found in Rickettsia prowazekii (strain Madrid E).